The primary structure comprises 521 residues: GMP synthase [glutamine-hydrolyzing] (521 aa).

The 196-residue stretch at 8-203 (KILILDFGAQ…VVDVCGCQTL (196 aa)) folds into the Glutamine amidotransferase type-1 domain. Cys85 (nucleophile) is an active-site residue. Active-site residues include His177 and Glu179. A GMPS ATP-PPase domain is found at 204–396 (WTAANIIDDQ…LGLPRTMVYR (193 aa)). An ATP-binding site is contributed by 231–237 (SGGVDSS).

As to quaternary structure, homodimer.

It carries out the reaction XMP + L-glutamine + ATP + H2O = GMP + L-glutamate + AMP + diphosphate + 2 H(+). It functions in the pathway purine metabolism; GMP biosynthesis; GMP from XMP (L-Gln route): step 1/1. Its function is as follows. Catalyzes the synthesis of GMP from XMP. The polypeptide is GMP synthase [glutamine-hydrolyzing] (Stenotrophomonas maltophilia (strain R551-3)).